A 161-amino-acid chain; its full sequence is N5-carboxyaminoimidazole ribonucleotide mutase (161 aa).

Substrate is bound by residues serine 9, aspartate 12, and arginine 39.

The protein belongs to the AIR carboxylase family. Class I subfamily.

The catalysed reaction is 5-carboxyamino-1-(5-phospho-D-ribosyl)imidazole + H(+) = 5-amino-1-(5-phospho-D-ribosyl)imidazole-4-carboxylate. It functions in the pathway purine metabolism; IMP biosynthesis via de novo pathway; 5-amino-1-(5-phospho-D-ribosyl)imidazole-4-carboxylate from 5-amino-1-(5-phospho-D-ribosyl)imidazole (N5-CAIR route): step 2/2. Functionally, catalyzes the conversion of N5-carboxyaminoimidazole ribonucleotide (N5-CAIR) to 4-carboxy-5-aminoimidazole ribonucleotide (CAIR). The polypeptide is N5-carboxyaminoimidazole ribonucleotide mutase (Vibrio parahaemolyticus serotype O3:K6 (strain RIMD 2210633)).